The sequence spans 517 residues: Benzoate 4-monooxygenase bphA (517 aa).

A helical transmembrane segment spans residues 4–24 (LLLSPYGAYLGLALLVLYYLL). N-linked (GlcNAc...) asparagine glycans are attached at residues N282 and N325. C461 provides a ligand contact to heme.

This sequence belongs to the cytochrome P450 family. Heme is required as a cofactor.

It is found in the membrane. The catalysed reaction is benzoate + reduced [NADPH--hemoprotein reductase] + O2 = 4-hydroxybenzoate + oxidized [NADPH--hemoprotein reductase] + H2O + H(+). Cytochrome P450 monooxygenase; part of the benzoic acid degradation pathway also known as the protocatechuic acid pathway. Benzoic acid debradation begins with the conversion of benzoic acid into 4-hydroxybenzoic acid through hydroxylation by the benzoate-4-monooxygenase bphA, and its partner NADPH-cytochrome P450 reductase cprA which act as a mediator in electron donation from NADPH. 4-Hydroxybenzoic acid is then converted into 3,4-dihydroxybenzoic acid (also called protocatechuic acid) by the p-hydroxybenzoate-m-hydroxylase phhA. Protocatechuic acid is converted into 3-carboxy-cis,cis-muconic acid by the intradiol ring-cleavage dioxygenase prcA, which is further metabolized through the 3-oxoadipate pathway to finally enter the tricarboxylic acid cycle (TCA). This is Benzoate 4-monooxygenase bphA from Aspergillus niger (strain ATCC MYA-4892 / CBS 513.88 / FGSC A1513).